The chain runs to 287 residues: Diphthine methyl ester synthase (287 aa).

S-adenosyl-L-methionine contacts are provided by residues leucine 9, aspartate 84, glycine 87, serine 112–isoleucine 113, valine 163, valine 221, and histidine 248.

The protein belongs to the diphthine synthase family.

It is found in the cytoplasm. It catalyses the reaction 2-[(3S)-amino-3-carboxypropyl]-L-histidyl-[translation elongation factor 2] + 4 S-adenosyl-L-methionine = diphthine methyl ester-[translation elongation factor 2] + 4 S-adenosyl-L-homocysteine + 3 H(+). It functions in the pathway protein modification; peptidyl-diphthamide biosynthesis. Functionally, S-adenosyl-L-methionine-dependent methyltransferase that catalyzes four methylations of the modified target histidine residue in translation elongation factor 2 (EF-2), to form an intermediate called diphthine methyl ester. The four successive methylation reactions represent the second step of diphthamide biosynthesis. The protein is Diphthine methyl ester synthase (DPH5) of Gibberella zeae (strain ATCC MYA-4620 / CBS 123657 / FGSC 9075 / NRRL 31084 / PH-1) (Wheat head blight fungus).